A 371-amino-acid chain; its full sequence is Aspartate-semialdehyde dehydrogenase (371 aa).

Residues 9–12 (RGMV), 37–38 (TS), and Gln-73 contribute to the NADP(+) site. Residue Arg-102 coordinates phosphate. The active-site Acyl-thioester intermediate is Cys-135. Gln-162 is a binding site for substrate. NADP(+) contacts are provided by residues 165–166 (SG) and Pro-193. Glu-241 is a binding site for substrate. Lys-244 contributes to the phosphate binding site. Position 268 (Arg-268) interacts with substrate. The active-site Proton acceptor is the His-275. Gln-351 is a binding site for NADP(+).

It belongs to the aspartate-semialdehyde dehydrogenase family. In terms of assembly, homodimer.

The enzyme catalyses L-aspartate 4-semialdehyde + phosphate + NADP(+) = 4-phospho-L-aspartate + NADPH + H(+). Its pathway is amino-acid biosynthesis; L-lysine biosynthesis via DAP pathway; (S)-tetrahydrodipicolinate from L-aspartate: step 2/4. The protein operates within amino-acid biosynthesis; L-methionine biosynthesis via de novo pathway; L-homoserine from L-aspartate: step 2/3. It functions in the pathway amino-acid biosynthesis; L-threonine biosynthesis; L-threonine from L-aspartate: step 2/5. Its function is as follows. Catalyzes the NADPH-dependent formation of L-aspartate-semialdehyde (L-ASA) by the reductive dephosphorylation of L-aspartyl-4-phosphate. In Neisseria meningitidis serogroup A / serotype 4A (strain DSM 15465 / Z2491), this protein is Aspartate-semialdehyde dehydrogenase.